A 137-amino-acid polypeptide reads, in one-letter code: Protein phosphatase 1 regulatory subunit 1B (137 aa).

The disordered stretch occupies residues 1–137 (DPKDRKKIQF…EEEEEEEDSQ (137 aa)). T33 is subject to Phosphothreonine; by PKA. The span at 40–62 (LXEHSSPEEEASPHQRAAGEGHH) shows a compositional bias: basic and acidic residues. Residues S44 and S45 each carry the phosphoserine modification. Phosphothreonine; by CDK5 is present on T74. The segment covering 88–99 (HLQSISNLGENQ) has biased composition (polar residues). S101 carries the post-translational modification Phosphoserine. The segment covering 108-117 (GELRELGYPR) has biased composition (basic and acidic residues). The span at 118 to 137 (EEEEEEEEDDEEEEEEEDSQ) shows a compositional bias: acidic residues. Phosphoserine is present on S136.

The protein belongs to the protein phosphatase inhibitor 1 family. Post-translationally, phosphorylation of Thr-33 is required for activity. Dopamine- and cyclic AMP-regulated neuronal phosphoprotein.

It is found in the cytoplasm. In terms of biological role, inhibitor of protein-phosphatase 1. This is Protein phosphatase 1 regulatory subunit 1B (PPP1R1B) from Sus scrofa (Pig).